We begin with the raw amino-acid sequence, 344 residues long: Bifunctional trans-3-hydroxy-L-proline dehydratase/2-epimerase (344 aa).

The active-site Proton acceptor is Ser-90. Residues 91-92 (GS), Asp-252, and 257-258 (GT) contribute to the substrate site.

Belongs to the proline racemase family.

It carries out the reaction trans-3-hydroxy-L-proline = 1-pyrroline-2-carboxylate + H2O. It catalyses the reaction trans-3-hydroxy-L-proline = cis-3-hydroxy-D-proline. In terms of biological role, bifunctional enzyme catalyzing both the dehydration of trans-3-hydroxy-L-proline (t3LHyp) to Delta(1)-pyrroline-2-carboxylate (Pyr2C) and 2-epimerization of t3LHyp to cis-3-hydroxy-D-proline (c3DHyp). No dehydratase activity with L-proline, trans-4-hydroxy-L-proline (t4LHyp), cis-4-hydroxy-L-proline (c4LHyp), D-proline, cis-4-hydroxy-D-proline (c4DHyp), trans-4-hydroxy-D-proline (t4DHyp) or L-serine as substrates. Displays neither t4LHyp epimerase nor proline racemase activity. Is likely involved in a degradation pathway that converts t3LHyp to L-proline, which would allow P.aeruginosa to grow on t3LHyp as a sole carbon source. This is Bifunctional trans-3-hydroxy-L-proline dehydratase/2-epimerase from Pseudomonas aeruginosa (strain ATCC 15692 / DSM 22644 / CIP 104116 / JCM 14847 / LMG 12228 / 1C / PRS 101 / PAO1).